We begin with the raw amino-acid sequence, 330 residues long: MLEPVGERPQLWRAELIVKHIPRKRFGQHFLTDQGIIEGIVQAIAPRAGQAVVEIGPGLAALTQPLVERLGHLTVIELDRDLAQQLRAHPQLTVVESDVLKVDFRQLAERLQHGPVRSAGLPQAETAPKGLEPAGSSSQQGPRDWLRQTAGAAAPSRGSAVHEVTSVGAHKLRVVGNLPYNISTPILFHLLDAVDVIEDQHFMLQKEVIDRMVAAPSTSDYGRLSVMLQWRYAMENVLFVPPQSFDPPPRVDSAVVRMVPHAHPAALDVKLLSQLVQVAFSQRRKLLRHTLGQWLTARGFPGAFDVQRRAEEVPVAEYVALAQQVAAMAV.

S-adenosyl-L-methionine is bound by residues His29, Leu31, Gly56, Glu77, and Asp98. The disordered stretch occupies residues 115–158; the sequence is PVRSAGLPQAETAPKGLEPAGSSSQQGPRDWLRQTAGAAAPSRG. Asn177 lines the S-adenosyl-L-methionine pocket.

This sequence belongs to the class I-like SAM-binding methyltransferase superfamily. rRNA adenine N(6)-methyltransferase family. RsmA subfamily.

The protein resides in the cytoplasm. The enzyme catalyses adenosine(1518)/adenosine(1519) in 16S rRNA + 4 S-adenosyl-L-methionine = N(6)-dimethyladenosine(1518)/N(6)-dimethyladenosine(1519) in 16S rRNA + 4 S-adenosyl-L-homocysteine + 4 H(+). Specifically dimethylates two adjacent adenosines (A1518 and A1519) in the loop of a conserved hairpin near the 3'-end of 16S rRNA in the 30S particle. May play a critical role in biogenesis of 30S subunits. The protein is Ribosomal RNA small subunit methyltransferase A of Polaromonas sp. (strain JS666 / ATCC BAA-500).